We begin with the raw amino-acid sequence, 144 residues long: Large ribosomal subunit protein uL15 (144 aa).

The span at 1–14 shows a compositional bias: basic and acidic residues; that stretch reads MKLHELKPNEGARD. The disordered stretch occupies residues 1 to 43; that stretch reads MKLHELKPNEGARDVRKRVGRGTSSGTGKTAGRGQKGQKARSK. Residues 23–35 are compositionally biased toward gly residues; it reads TSSGTGKTAGRGQ.

Belongs to the universal ribosomal protein uL15 family. Part of the 50S ribosomal subunit.

Binds to the 23S rRNA. This Latilactobacillus sakei subsp. sakei (strain 23K) (Lactobacillus sakei subsp. sakei) protein is Large ribosomal subunit protein uL15.